The following is a 232-amino-acid chain: Cytochrome c oxidase subunit 2 (232 aa).

At methionine 1 to serine 30 the chain is on the mitochondrial intermembrane side. Residues leucine 31–tyrosine 52 traverse the membrane as a helical segment. Residues phenylalanine 53–valine 69 are Mitochondrial matrix-facing. Residues phenylalanine 70–tyrosine 89 form a helical membrane-spanning segment. Residues glycine 90–aspartate 232 are Mitochondrial intermembrane-facing. Cu cation is bound by residues histidine 164, cysteine 199, glutamate 201, cysteine 203, histidine 207, and methionine 210. Residue glutamate 201 coordinates Mg(2+).

It belongs to the cytochrome c oxidase subunit 2 family. In terms of assembly, component of the cytochrome c oxidase (complex IV, CIV), a multisubunit enzyme composed of a catalytic core of 3 subunits and several supernumerary subunits. The complex exists as a monomer or a dimer and forms supercomplexes (SCs) in the inner mitochondrial membrane with ubiquinol-cytochrome c oxidoreductase (cytochrome b-c1 complex, complex III, CIII). Requires Cu cation as cofactor.

The protein localises to the mitochondrion inner membrane. The enzyme catalyses 4 Fe(II)-[cytochrome c] + O2 + 8 H(+)(in) = 4 Fe(III)-[cytochrome c] + 2 H2O + 4 H(+)(out). Its function is as follows. Component of the cytochrome c oxidase, the last enzyme in the mitochondrial electron transport chain which drives oxidative phosphorylation. The respiratory chain contains 3 multisubunit complexes succinate dehydrogenase (complex II, CII), ubiquinol-cytochrome c oxidoreductase (cytochrome b-c1 complex, complex III, CIII) and cytochrome c oxidase (complex IV, CIV), that cooperate to transfer electrons derived from NADH and succinate to molecular oxygen, creating an electrochemical gradient over the inner membrane that drives transmembrane transport and the ATP synthase. Cytochrome c oxidase is the component of the respiratory chain that catalyzes the reduction of oxygen to water. Electrons originating from reduced cytochrome c in the intermembrane space (IMS) are transferred via the dinuclear copper A center (CU(A)) of subunit 2 and heme A of subunit 1 to the active site in subunit 1, a binuclear center (BNC) formed by heme A3 and copper B (CU(B)). The BNC reduces molecular oxygen to 2 water molecules using 4 electrons from cytochrome c in the IMS and 4 protons from the mitochondrial matrix. In Ascaris suum (Pig roundworm), this protein is Cytochrome c oxidase subunit 2 (COII).